We begin with the raw amino-acid sequence, 350 residues long: MPVLHNRISNDELKAKMLAESEPRTTISFYKYFTIASPQQTRDALYQVFTALDVFGRVYLAHEGINAQISVPQSKLETFRQQLYTFDPALDGLRLNIALEDDGKSFWVLRMKVRDRIVADGIDDPSFDASNVGDYLKAADVNVMLDDPDAVFIDMRNHYEYEVGHFENALEIPADTFREQLPKAVEMLREHADKKIVMYCTGGIRCEKASAWMKHNGFNKVWHIEGGIIEYARRAREQGLPVRFIGKNFVFDERMGERISDEVIAHCHQCGASCDSHTNCKNDGCHLLFIQCPQCASKFNGCCSEQCCEELALPEEEQRRRRAGRENGNKIFNKSRGRLNSKLSIPDPAE.

The 95-residue stretch at 146–240 (DDPDAVFIDM…YARRAREQGL (95 aa)) folds into the Rhodanese domain. Cysteine 200 functions as the Cysteine persulfide intermediate in the catalytic mechanism. Basic and acidic residues predominate over residues 319 to 328 (RRRRAGRENG). A disordered region spans residues 319–350 (RRRRAGRENGNKIFNKSRGRLNSKLSIPDPAE).

It belongs to the TrhO family.

It carries out the reaction uridine(34) in tRNA + AH2 + O2 = 5-hydroxyuridine(34) in tRNA + A + H2O. Catalyzes oxygen-dependent 5-hydroxyuridine (ho5U) modification at position 34 in tRNAs. The chain is tRNA uridine(34) hydroxylase from Salmonella choleraesuis (strain SC-B67).